A 571-amino-acid chain; its full sequence is MAKQIVFDDDARGPLLAGVSKLARAVRSTLGPRGRNAVLDKGWGSPKVTKDGVTVAEDIELDDPFENLGAQLVKEAASKTNDVAGDGTTTATVLSEAIFREGLKMVATGADPMALSRGIQKAVDTAIAQIAKMATPINEKSKSDIKQVATIAGNNDPQIGDVLADAFTKVGKNGVITVEEGRSNETYVDVVEGMQFDRGFLSPHFVTNQDEVTVELDDCYILLFEEKISNNKKMIPLLEAISKAKKPLLIIAEDTEGEALATLVVNKMRGILSACAVKAPGYGDRRKAILGDIAALTGGKAIFKDLGIDLESVKVSDLGRAKQIRITSEATTIVGGAGKKADIEGRVAQIRREIEATDSDYDREKLQERLAKLAGGVAQINVGAATETEMKERKALIDDARAATQAALEEGIVPGGGTALLRCRAAVEKLEKATEGDQKLGVRIIRNVLDQPMRAIANNAGLDGAVVVNRVLQMKGKTEGYDANADKYCDLVAAGIVDPAKVVRTSLTNAASVAALLLTTESLVTEIPVEEEPAGGDHHDHGMGGGMPDMGGMGMGGMGGMGGMGGMGGMM.

ATP-binding positions include 29-32 (TLGP), K50, 86-90 (DGTTT), G416, and D498.

It belongs to the chaperonin (HSP60) family. As to quaternary structure, forms a cylinder of 14 subunits composed of two heptameric rings stacked back-to-back. Interacts with the co-chaperonin GroES.

The protein localises to the cytoplasm. It catalyses the reaction ATP + H2O + a folded polypeptide = ADP + phosphate + an unfolded polypeptide.. Functionally, together with its co-chaperonin GroES, plays an essential role in assisting protein folding. The GroEL-GroES system forms a nano-cage that allows encapsulation of the non-native substrate proteins and provides a physical environment optimized to promote and accelerate protein folding. This Rhodopirellula baltica (strain DSM 10527 / NCIMB 13988 / SH1) protein is Chaperonin GroEL 1.